Consider the following 60-residue polypeptide: MDVRRAQEIASSPVMANVTYNGQRIYIEHVDQQKGVATIHPLDNPSQKQSVPVASLEEHS.

Residues 38 to 60 (TIHPLDNPSQKQSVPVASLEEHS) are disordered.

This sequence belongs to the SspH family.

The protein localises to the spore core. The chain is Small, acid-soluble spore protein H 2 from Geobacillus thermodenitrificans (strain NG80-2).